The following is a 180-amino-acid chain: UPF0227 protein YcfP (180 aa).

Belongs to the UPF0227 family.

The protein is UPF0227 protein YcfP of Salmonella paratyphi A (strain ATCC 9150 / SARB42).